Consider the following 396-residue polypeptide: Protein NDRG1-A (396 aa).

A disordered region spans residues 326–396 (RSRTGSAASS…NSPKSMEVSC (71 aa)). Residues 327–340 (SRTGSAASSSSQDG) show a composition bias toward low complexity. 4 consecutive repeat copies span residues 340 to 349 (GNRSRSHTNE), 350 to 359 (GSRSRSHTGD), 360 to 369 (GNRSRAHTGD), and 370 to 379 (GNRSRSHTDT). The interval 340-379 (GNRSRSHTNEGSRSRSHTGDGNRSRAHTGDGNRSRSHTDT) is 4 X 10 AA tandem repeats of G-[NS]-R-S-R-[AS]-H-T-[DGN]-[DET]. The span at 346–377 (HTNEGSRSRSHTGDGNRSRAHTGDGNRSRSHT) shows a compositional bias: basic and acidic residues. Over residues 378–390 (DTNNINSDQNSPK) the composition is skewed to polar residues.

Belongs to the NDRG family.

Its function is as follows. May be involved in pronephros development, after specification of the pronephros. The chain is Protein NDRG1-A (ndrg1-a) from Xenopus laevis (African clawed frog).